A 381-amino-acid chain; its full sequence is Queuine tRNA-ribosyltransferase (381 aa).

Catalysis depends on D96, which acts as the Proton acceptor. Residues 96-100 (DSGGF), D150, Q193, and G220 contribute to the substrate site. Residues 251–257 (GVGSPDS) are RNA binding. The Nucleophile role is filled by D270. An RNA binding; important for wobble base 34 recognition region spans residues 275 to 279 (TRIAR). Residues C308, C310, C313, and H339 each coordinate Zn(2+).

It belongs to the queuine tRNA-ribosyltransferase family. As to quaternary structure, homodimer. Within each dimer, one monomer is responsible for RNA recognition and catalysis, while the other monomer binds to the replacement base PreQ1. It depends on Zn(2+) as a cofactor.

The enzyme catalyses 7-aminomethyl-7-carbaguanine + guanosine(34) in tRNA = 7-aminomethyl-7-carbaguanosine(34) in tRNA + guanine. The protein operates within tRNA modification; tRNA-queuosine biosynthesis. In terms of biological role, catalyzes the base-exchange of a guanine (G) residue with the queuine precursor 7-aminomethyl-7-deazaguanine (PreQ1) at position 34 (anticodon wobble position) in tRNAs with GU(N) anticodons (tRNA-Asp, -Asn, -His and -Tyr). Catalysis occurs through a double-displacement mechanism. The nucleophile active site attacks the C1' of nucleotide 34 to detach the guanine base from the RNA, forming a covalent enzyme-RNA intermediate. The proton acceptor active site deprotonates the incoming PreQ1, allowing a nucleophilic attack on the C1' of the ribose to form the product. After dissociation, two additional enzymatic reactions on the tRNA convert PreQ1 to queuine (Q), resulting in the hypermodified nucleoside queuosine (7-(((4,5-cis-dihydroxy-2-cyclopenten-1-yl)amino)methyl)-7-deazaguanosine). This is Queuine tRNA-ribosyltransferase from Lysinibacillus sphaericus (strain C3-41).